The chain runs to 120 residues: MPVLLRAKAHGLVVTGKNLHYEGSLTLGRDIIEAAGFYPLEKVEVYNVTNGARFTTYVIPGRPGEVVLNGAAARLGEVGDVIIVAAYECVANPASHIATIAIFEGNKLKEVRKISLSDMY.

S24 (schiff-base intermediate with substrate; via pyruvic acid) is an active-site residue. S24 carries the post-translational modification Pyruvic acid (Ser). Residue T56 coordinates substrate. Y57 acts as the Proton donor in catalysis. Residue 70–72 coordinates substrate; sequence GAA.

This sequence belongs to the PanD family. In terms of assembly, heterooctamer of four alpha and four beta subunits. Requires pyruvate as cofactor. Post-translationally, is synthesized initially as an inactive proenzyme, which is activated by self-cleavage at a specific serine bond to produce a beta-subunit with a hydroxyl group at its C-terminus and an alpha-subunit with a pyruvoyl group at its N-terminus.

Its subcellular location is the cytoplasm. It carries out the reaction L-aspartate + H(+) = beta-alanine + CO2. It functions in the pathway cofactor biosynthesis; (R)-pantothenate biosynthesis; beta-alanine from L-aspartate: step 1/1. Its function is as follows. Catalyzes the pyruvoyl-dependent decarboxylation of aspartate to produce beta-alanine. The chain is Aspartate 1-decarboxylase from Pyrobaculum islandicum (strain DSM 4184 / JCM 9189 / GEO3).